The sequence spans 483 residues: GTPase Der (483 aa).

2 EngA-type G domains span residues 3 to 167 (FTLA…GEER) and 212 to 387 (LRIA…EIWN). Residues 9–16 (GRPNVGKS), 56–60 (DTAGL), 119–122 (NKAE), 218–225 (GRPNAGKS), 265–269 (DTAGM), and 330–333 (NKWD) each bind GTP. In terms of domain architecture, KH-like spans 388 to 472 (RRISTGRLNR…PIRLSLRTSD (85 aa)).

Belongs to the TRAFAC class TrmE-Era-EngA-EngB-Septin-like GTPase superfamily. EngA (Der) GTPase family. In terms of assembly, associates with the 50S ribosomal subunit.

Its function is as follows. GTPase that plays an essential role in the late steps of ribosome biogenesis. In Brucella ovis (strain ATCC 25840 / 63/290 / NCTC 10512), this protein is GTPase Der.